A 316-amino-acid chain; its full sequence is Pyridoxal 5'-phosphate synthase subunit PdxS (316 aa).

Asp-44 provides a ligand contact to D-ribose 5-phosphate. Lys-101 acts as the Schiff-base intermediate with D-ribose 5-phosphate in catalysis. Residue Gly-173 coordinates D-ribose 5-phosphate. Lys-185 contacts D-glyceraldehyde 3-phosphate. D-ribose 5-phosphate contacts are provided by residues Gly-234 and 255-256; that span reads GS.

It belongs to the PdxS/SNZ family. In the presence of PdxT, forms a dodecamer of heterodimers.

It catalyses the reaction aldehydo-D-ribose 5-phosphate + D-glyceraldehyde 3-phosphate + L-glutamine = pyridoxal 5'-phosphate + L-glutamate + phosphate + 3 H2O + H(+). It functions in the pathway cofactor biosynthesis; pyridoxal 5'-phosphate biosynthesis. Catalyzes the formation of pyridoxal 5'-phosphate from ribose 5-phosphate (RBP), glyceraldehyde 3-phosphate (G3P) and ammonia. The ammonia is provided by the PdxT subunit. Can also use ribulose 5-phosphate and dihydroxyacetone phosphate as substrates, resulting from enzyme-catalyzed isomerization of RBP and G3P, respectively. This chain is Pyridoxal 5'-phosphate synthase subunit PdxS, found in Sulfurisphaera tokodaii (strain DSM 16993 / JCM 10545 / NBRC 100140 / 7) (Sulfolobus tokodaii).